A 608-amino-acid polypeptide reads, in one-letter code: Probable methyltransferase PMT3 (608 aa).

Over 1–12 the chain is Cytoplasmic; sequence MKGRSDGGQKKR. Residues 13-33 form a helical; Signal-anchor for type II membrane protein membrane-spanning segment; it reads VIALVCVAAVVLVFVYLFYGS. At 34–608 the chain is on the lumenal side; the sequence is SDHRASAIEY…LTSESLRDME (575 aa). A glycan (N-linked (GlcNAc...) asparagine) is linked at Asn342.

The protein belongs to the methyltransferase superfamily.

The protein resides in the golgi apparatus membrane. This is Probable methyltransferase PMT3 from Arabidopsis thaliana (Mouse-ear cress).